The chain runs to 206 residues: Ribosomal RNA large subunit methyltransferase E (206 aa).

Residues Gly63, Trp65, Asp83, Asp99, and Asp124 each contribute to the S-adenosyl-L-methionine site. The active-site Proton acceptor is the Lys164.

The protein belongs to the class I-like SAM-binding methyltransferase superfamily. RNA methyltransferase RlmE family.

It localises to the cytoplasm. It carries out the reaction uridine(2552) in 23S rRNA + S-adenosyl-L-methionine = 2'-O-methyluridine(2552) in 23S rRNA + S-adenosyl-L-homocysteine + H(+). Its function is as follows. Specifically methylates the uridine in position 2552 of 23S rRNA at the 2'-O position of the ribose in the fully assembled 50S ribosomal subunit. This Buchnera aphidicola subsp. Acyrthosiphon pisum (strain APS) (Acyrthosiphon pisum symbiotic bacterium) protein is Ribosomal RNA large subunit methyltransferase E.